The following is a 66-amino-acid chain: Alpha-actitoxin-Ms11a-1 (66 aa).

Residues 1 to 24 form the signal peptide; that stretch reads MASKIFFVLAVFLVMSAVLPESFA. Disulfide bonds link Cys26/Cys41, Cys33/Cys46, and Cys40/Cys61.

The protein resides in the secreted. Its subcellular location is the nematocyst. Alpha-toxins act on postsynaptic membranes, they bind to the nicotinic acetylcholine receptors (nAChR) and thus inhibit them. This toxin competes with alpha-bungarotoxin for binding to orthosteric sites on muscle-type T.carlifornicus (IC(50)=408 nM) and human alpha-7/CHRNA7 nAChRs (IC(50)=14.16 uM). The polypeptide is Alpha-actitoxin-Ms11a-1 (Metridium senile (Brown sea anemone)).